Here is a 351-residue protein sequence, read N- to C-terminus: Histidine protein kinase SaeS (351 aa).

2 consecutive transmembrane segments (helical) span residues 9–29 (IIIGVVSSILLTSTILAIAYI) and 40–60 (TLTLTTIITSCLTLLICSIFI). In terms of domain architecture, HAMP spans 61–114 (NPLIQKIKQFNIKTKQFANGNYASNDKTFNSPKEIYELNQSFNKMASEITQQMN). The Histidine kinase domain occupies 129–348 (NLAHDLKTPL…TMTVTLHKLD (220 aa)). Residue H132 is modified to Phosphohistidine; by autocatalysis.

Autophosphorylated.

The protein resides in the cell membrane. It catalyses the reaction ATP + protein L-histidine = ADP + protein N-phospho-L-histidine.. Its function is as follows. Member of the two-component regulatory system SaeR/SaeS involved in the regulation of staphylococcal virulence factors in a strain-dependent fashion. Probably functions as a membrane-associated protein kinase that upon sensing the appropriate signal, autophosphorylates and in turn activates the cytosolic response regulator SaeR. The chain is Histidine protein kinase SaeS (saeS) from Staphylococcus aureus (strain MRSA252).